The following is a 559-amino-acid chain: Potassium-transporting ATPase potassium-binding subunit (559 aa).

13 helical membrane passes run 5–25, 27–47, 63–83, 132–152, 170–190, 253–273, 283–303, 327–347, 356–376, 379–399, 416–436, 484–504, and 524–544; these read GFLLIASFLLILLVLAKPLGS, LARLIAAVPLPGVAGVERILW, LLALLTLNLLGLGILFCLLFW, GLTVQNFLSAATGIAVVFALI, LVRITLWILFPVALIIALFFI, LAQMLAIFLIPAALCFAFGEA, LLWAMSFIFVVCVAVVMWAEV, FGVLASSLFAVVTTAASCGAV, ALGGMVPMWLMQIGEVVFGGV, GLYGMLLFVLLAVFIAGLMIG, MTALAILVTPMLVLLGSALAM, LLAFCMFVGRFGVIIPVMAIA, and GALFIGLLIGTVLLVGALTFI.

The protein belongs to the KdpA family. As to quaternary structure, the system is composed of three essential subunits: KdpA, KdpB and KdpC.

It localises to the cell inner membrane. Part of the high-affinity ATP-driven potassium transport (or Kdp) system, which catalyzes the hydrolysis of ATP coupled with the electrogenic transport of potassium into the cytoplasm. This subunit binds the periplasmic potassium ions and delivers the ions to the membrane domain of KdpB through an intramembrane tunnel. The protein is Potassium-transporting ATPase potassium-binding subunit of Salmonella choleraesuis (strain SC-B67).